A 465-amino-acid chain; its full sequence is MFIDGKWIIRDDIDVFDPYTLKNIEKITALDREETKNAIEITEKNKEVMKNLSPSKRYSILMKIAEQISLKKDLFAKTISIDVGKPIKQSKIEVDRTLTAFRLSAFYAKELRGETINSENGLIFTKKEPLGVVGAITPFNFPLNLITHKIGPAIATGNSVILHPSSKAPIAAIYLTKIIEHVLKQMDIPRGVFNLATGNGDIVGDEISKNDKINMVSFTGSVEIGESISKNAKMKKVTLELGGNNPMIVLKDSDIKLAAKSAVKSKFLNAGQVCISVGQVLVEEEVLETFTKYIIDETKNLVLGNPLDTKTDIGPLISPESALRIENLIKESVNEGGELLIGGNRQNSLIFPAVINIDEDNLLSKIETFGPVLPILKVKNSEEAVSIANNSKYGLQAGVFTNDINKAMKIADSLEYGGIMINSSPTFRKDNMPFGGVKKSGLGREGIKYTVEEMCETKTVVIHNI.

220-225 (GSVEIG) contacts NAD(+). Catalysis depends on residues E240 and C274.

The protein belongs to the aldehyde dehydrogenase family. As to quaternary structure, homotetramer.

The catalysed reaction is (S)-lactaldehyde + NAD(+) + H2O = (S)-lactate + NADH + 2 H(+). It participates in cofactor biosynthesis; coenzyme F420 biosynthesis. In terms of biological role, involved in F420 biosynthesis through the oxidation of lactaldehyde to lactate. In Methanococcus maripaludis (strain C7 / ATCC BAA-1331), this protein is Lactaldehyde dehydrogenase.